The primary structure comprises 1021 residues: Ankyrin repeat- and BTB/POZ domain-containing protein 3-A (1021 aa).

The helical transmembrane segment at 160–180 (MVLSWTISVNCITAALSALSL) threads the bilayer. 4 ANK repeats span residues 515-544 (QGMT…DINS), 561-590 (RQGT…NVEG), 599-628 (YTET…DPLI), and 642-671 (GEMN…KDKG). The BTB domain maps to 836-902 (SDVTFLVEGK…LYCGGTESLH (67 aa)).

The protein resides in the membrane. The chain is Ankyrin repeat- and BTB/POZ domain-containing protein 3-A (abtb3a) from Danio rerio (Zebrafish).